The chain runs to 380 residues: E3 ubiquitin-protein ligase Iruka (380 aa).

The segment at 50–92 is disordered; the sequence is APEMDSSTAGASGSARSGSSGSGSSGSHDTLSRGSSSSGSQVN. Low complexity-rich tracts occupy residues 55–68 and 74–89; these read SSTA…RSGS and SGSH…SSGS. Residues 253 to 294 form an RING-type; atypical zinc finger; that stretch reads CSICWDDFKIDETVRKLPCSHLYHENCIVPWLNLHSTCPICR. Residues 317–367 form a disordered region; sequence EMAADGSNSERRSASTATGTDNPSPANNPSQAAAEGGRTRPDANPAQAARN. A compositionally biased stretch (low complexity) spans 338-350; sequence NPSPANNPSQAAA.

Interacts (via N-terminus) with CG7546 (via Ubl domain).

It catalyses the reaction S-ubiquitinyl-[E2 ubiquitin-conjugating enzyme]-L-cysteine + [acceptor protein]-L-lysine = [E2 ubiquitin-conjugating enzyme]-L-cysteine + N(6)-ubiquitinyl-[acceptor protein]-L-lysine.. The protein operates within protein modification; protein ubiquitination. In terms of biological role, E3 ubiquitin-protein ligase that mediates E2-dependent, 'Lys-48'- and/or 'Lys-63'-linked polyubiquitination of substrates. Recognizes miRNA-empty Ago1 and triggers its degradation via polyubiquitination independently of the Bag6 complex. By targeting miRNA-empty Ago1, eliminates dysfunctional Ago1 not able to bind miRNA and thereby plays a role in the quality control of miRNA-mediated silencing. In Drosophila melanogaster (Fruit fly), this protein is E3 ubiquitin-protein ligase Iruka.